The chain runs to 122 residues: Small ribosomal subunit protein uS13 (122 aa).

The segment at 95-122 is disordered; it reads SLPVRGQRTHTNARTRKGPAKSIAGKKK.

This sequence belongs to the universal ribosomal protein uS13 family. As to quaternary structure, part of the 30S ribosomal subunit. Forms a loose heterodimer with protein S19. Forms two bridges to the 50S subunit in the 70S ribosome.

Its function is as follows. Located at the top of the head of the 30S subunit, it contacts several helices of the 16S rRNA. In the 70S ribosome it contacts the 23S rRNA (bridge B1a) and protein L5 of the 50S subunit (bridge B1b), connecting the 2 subunits; these bridges are implicated in subunit movement. Contacts the tRNAs in the A and P-sites. The sequence is that of Small ribosomal subunit protein uS13 from Mesorhizobium japonicum (strain LMG 29417 / CECT 9101 / MAFF 303099) (Mesorhizobium loti (strain MAFF 303099)).